Reading from the N-terminus, the 196-residue chain is Glycerol-3-phosphate acyltransferase (196 aa).

The next 5 helical transmembrane spans lie at 1–21, 55–75, 81–101, 118–138, and 140–160; these read MIIF…SISG, IAIF…WLGT, PIYL…PIYF, AISI…VYLF, and YASL…WYIQ.

This sequence belongs to the PlsY family. As to quaternary structure, probably interacts with PlsX.

The protein resides in the cell inner membrane. It catalyses the reaction an acyl phosphate + sn-glycerol 3-phosphate = a 1-acyl-sn-glycero-3-phosphate + phosphate. It functions in the pathway lipid metabolism; phospholipid metabolism. Its function is as follows. Catalyzes the transfer of an acyl group from acyl-phosphate (acyl-PO(4)) to glycerol-3-phosphate (G3P) to form lysophosphatidic acid (LPA). This enzyme utilizes acyl-phosphate as fatty acyl donor, but not acyl-CoA or acyl-ACP. This chain is Glycerol-3-phosphate acyltransferase, found in Blochmanniella floridana.